A 407-amino-acid chain; its full sequence is Phosphopentomutase (407 aa).

6 residues coordinate Mn(2+): Asp-10, Asp-306, His-311, Asp-347, His-348, and His-359.

The protein belongs to the phosphopentomutase family. Requires Mn(2+) as cofactor.

It is found in the cytoplasm. The catalysed reaction is 2-deoxy-alpha-D-ribose 1-phosphate = 2-deoxy-D-ribose 5-phosphate. The enzyme catalyses alpha-D-ribose 1-phosphate = D-ribose 5-phosphate. The protein operates within carbohydrate degradation; 2-deoxy-D-ribose 1-phosphate degradation; D-glyceraldehyde 3-phosphate and acetaldehyde from 2-deoxy-alpha-D-ribose 1-phosphate: step 1/2. Isomerase that catalyzes the conversion of deoxy-ribose 1-phosphate (dRib-1-P) and ribose 1-phosphate (Rib-1-P) to deoxy-ribose 5-phosphate (dRib-5-P) and ribose 5-phosphate (Rib-5-P), respectively. This is Phosphopentomutase from Pectobacterium carotovorum subsp. carotovorum (strain PC1).